The sequence spans 142 residues: COMPASS component SHG1 (142 aa).

The protein belongs to the SHG1 family. In terms of assembly, component of the Set1C/COMPASS complex which consists of SET1(2), BRE2(2), SPP1(2), SDC1(1), SHG1(1), SWD1(1), SWD2(1), and SWD3(1).

Its subcellular location is the nucleus. Functionally, the COMPASS (Set1C) complex specifically mono-, di- and trimethylates histone H3 to form H3K4me1/2/3, which subsequently plays a role in telomere length maintenance and transcription elongation regulation. In Saccharomyces cerevisiae (strain ATCC 204508 / S288c) (Baker's yeast), this protein is COMPASS component SHG1 (SHG1).